The primary structure comprises 992 residues: Disks large-associated protein 1 (992 aa).

2 disordered regions span residues 150–209 and 355–376; these read TKSH…SWWS and KAMG…PKVA. S169 carries the phosphoserine modification. Residues 194-209 are compositionally biased toward low complexity; sequence RSNASNASPTSPSWWS. 13 positions are modified to phosphoserine: S362, S365, S368, S372, S389, S418, S421, S425, S428, S437, S509, S516, and S578. T579 is subject to Phosphothreonine. S581 and S605 each carry phosphoserine. Residue T606 is modified to Phosphothreonine. Phosphoserine is present on residues S608 and S611. Interaction with DYL2 regions lie at residues 665–676 and 687–698; these read LSIGIQVDDAEE and NKFQSVGVQVEE. The segment at 914–980 is disordered; the sequence is WKQMDPLDKK…QNSATESAES (67 aa). 2 stretches are compositionally biased toward basic and acidic residues: residues 918–927 and 943–958; these read DPLDKKERRA and IRER…EARK. S947 bears the Phosphoserine mark. The span at 969–978 shows a compositional bias: polar residues; that stretch reads VRQNSATESA. The short motif at 990–992 is the PDZ-binding element; it reads TRL.

It belongs to the SAPAP family. Interacts with the guanylate kinase-like domain of DLG1, DLG2, DLG3, DLG4 and AIP1. Interacts with the PDZ domain of SHANK1, SHANK2 and SHANK3. Found in a complex with DLG4 and SHANK1, SHANK2 or SHANK3. Found in a complex with DLG4 and BEGAIN. Interacts with DYL2 and LRFN1. Interacts with MPP2 (via the SH3-Guanylate kinase-like sub-module). In terms of processing, ubiquitinated by TRIM3; leading to proteasomal degradation. Highest levels in the neocortex, part of the hippocampus, the granule cell layer of the cerebellum, the glomerular layer of the olfactory bulb, the inner plexiform layer of the retina, the ventral and dorsal horn of the spinal cord, the neuromuscular junction and the submandibular ganglion.

It is found in the cell membrane. Its subcellular location is the postsynaptic density. The protein localises to the synapse. Its function is as follows. Part of the postsynaptic scaffold in neuronal cells. The polypeptide is Disks large-associated protein 1 (Dlgap1) (Mus musculus (Mouse)).